Reading from the N-terminus, the 512-residue chain is Maturase K (512 aa).

This sequence belongs to the intron maturase 2 family. MatK subfamily.

It localises to the plastid. The protein resides in the chloroplast. In terms of biological role, usually encoded in the trnK tRNA gene intron. Probably assists in splicing its own and other chloroplast group II introns. This is Maturase K from Amorphophallus paeoniifolius (Whitespot giant arum).